We begin with the raw amino-acid sequence, 292 residues long: Fat storage-inducing transmembrane protein 1 (292 aa).

Residues 1–18 (MERGPTVGAGLGAGTRVR) are Lumenal-facing. A helical transmembrane segment spans residues 19-39 (ALLGCLVKVLLWVASALLYFG). Residues 40 to 54 (SEQAARLLGSPCLRR) are Cytoplasmic-facing. A helical membrane pass occupies residues 55–75 (LYHAWLAAVVIFGPLLQFHVN). Residues 76–94 (SRTIFASHGNFFNIKFVNS) lie on the Lumenal side of the membrane. Residues 95-115 (AWGWTCTFLGGFVLLVVFLAT) form a helical membrane-spanning segment. Residues 116–141 (RRVAVTARHLSRLVVGAAVWRGAGRA) lie on the Cytoplasmic side of the membrane. A helical transmembrane segment spans residues 142–162 (FLLIEDLTGSCFEPLPQGLLL). The Lumenal segment spans residues 163-187 (HELPDRKSCLAAGHQWRGYTVSSHT). H186 is an active-site residue. Residues 188–208 (FLLTFCCLLMAEEAAVFAKYL) form a helical membrane-spanning segment. Residues 209–220 (AHGLPAGAPLRL) lie on the Cytoplasmic side of the membrane. Residues 221–241 (VFLLNVLLLGLWNFLLLCTVI) traverse the membrane as a helical segment. Residues 242-249 (YFHQYTHK) lie on the Lumenal side of the membrane. Residue H244 is part of the active site. A helical membrane pass occupies residues 250-270 (VVGAAVGTFAWYLTYGSWYHQ). Over 271–292 (PWSPGIPGHGLFPRSRSMRKHN) the chain is Cytoplasmic.

It belongs to the FIT family. FIT1 subfamily. In terms of tissue distribution, predominantly expressed in skeletal muscle and at lower levels in the heart (at protein level). In the heart, mRNA expression levels do not correlate well with protein levels, suggesting post-transcriptional regulation in this organ.

The protein localises to the endoplasmic reticulum membrane. Functionally, plays an important role in the formation of lipid droplets (LDs) which are storage organelles at the center of lipid and energy homeostasis. Directly binds to diacylglycerol (DAGs) and triacylglycerol. In Mus musculus (Mouse), this protein is Fat storage-inducing transmembrane protein 1.